Reading from the N-terminus, the 226-residue chain is Urease accessory protein UreF (226 aa).

Belongs to the UreF family. UreD, UreF and UreG form a complex that acts as a GTP-hydrolysis-dependent molecular chaperone, activating the urease apoprotein by helping to assemble the nickel containing metallocenter of UreC. The UreE protein probably delivers the nickel.

The protein localises to the cytoplasm. Required for maturation of urease via the functional incorporation of the urease nickel metallocenter. The protein is Urease accessory protein UreF of Nitrosospira multiformis (strain ATCC 25196 / NCIMB 11849 / C 71).